We begin with the raw amino-acid sequence, 647 residues long: CRE-binding bZIP protein SKO1 (647 aa).

4 disordered regions span residues 1–119, 135–204, 305–331, and 353–429; these read MSSE…GSKR, STTN…QMPG, TPTT…TSTK, and KENE…EEQE. Positions 51–85 are enriched in polar residues; it reads RNNSTSTITQHSQRSTHSLNSIPEENGNSTVTDNS. The residue at position 94 (serine 94) is a Phosphoserine. Threonine 113 is subject to Phosphothreonine. Low complexity-rich tracts occupy residues 138 to 194 and 305 to 329; these read NPSQ…SGNG and TPTT…PNTS. 2 stretches are compositionally biased toward polar residues: residues 357–368 and 396–405; these read NLTTQIENNDQF and RKNSAVTTAP. Serine 399 carries the phosphoserine modification. One can recognise a bZIP domain in the interval 429–492; sequence ERKRKEFLER…PSSSSNSQFN (64 aa). The tract at residues 430 to 451 is basic motif; that stretch reads RKRKEFLERNRVAASKFRKRKK. The tract at residues 454–461 is leucine-zipper; sequence IKKIENDL. Serine 558 is subject to Phosphoserine.

This sequence belongs to the bZIP family.

Its subcellular location is the nucleus. In terms of biological role, binds to the CRE motif 5'-TGACGTCA-3' and acts as a repressor of transcription of the SUC2 gene and most probably other genes. In Saccharomyces cerevisiae (strain ATCC 204508 / S288c) (Baker's yeast), this protein is CRE-binding bZIP protein SKO1 (SKO1).